Reading from the N-terminus, the 385-residue chain is Cytochrome b (385 aa).

Helical transmembrane passes span 34–54 (FGSI…ILTM), 78–99 (WFIR…FIHI), 114–134 (WYSG…GYVL), and 179–199 (FLVL…THLL). The heme b site is built by histidine 84 and histidine 98. Histidine 183 and histidine 197 together coordinate heme b. Residue histidine 202 coordinates a ubiquinone. A run of 4 helical transmembrane segments spans residues 227–247 (FKDI…STLF), 289–309 (LMGV…PFLI), 321–341 (FMQF…WLGA), and 348–368 (YTIM…FLFP).

Belongs to the cytochrome b family. The cytochrome bc1 complex contains 3 respiratory subunits (MT-CYB, CYC1 and UQCRFS1), 2 core proteins (UQCRC1 and UQCRC2) and probably 6 low-molecular weight proteins. Heme b serves as cofactor.

It is found in the mitochondrion inner membrane. Its function is as follows. Component of the ubiquinol-cytochrome c reductase complex (complex III or cytochrome b-c1 complex) that is part of the mitochondrial respiratory chain. The b-c1 complex mediates electron transfer from ubiquinol to cytochrome c. Contributes to the generation of a proton gradient across the mitochondrial membrane that is then used for ATP synthesis. In Myxine glutinosa (Atlantic hagfish), this protein is Cytochrome b (MT-CYB).